We begin with the raw amino-acid sequence, 267 residues long: 3-methyl-2-oxobutanoate hydroxymethyltransferase (267 aa).

Mg(2+)-binding residues include Asp-45 and Asp-84. 3-methyl-2-oxobutanoate contacts are provided by residues 45–46 (DS), Asp-84, and Lys-113. Residue Glu-115 participates in Mg(2+) binding. Residue Glu-182 is the Proton acceptor of the active site.

This sequence belongs to the PanB family. In terms of assembly, homodecamer; pentamer of dimers. It depends on Mg(2+) as a cofactor.

The protein resides in the cytoplasm. It carries out the reaction 3-methyl-2-oxobutanoate + (6R)-5,10-methylene-5,6,7,8-tetrahydrofolate + H2O = 2-dehydropantoate + (6S)-5,6,7,8-tetrahydrofolate. Its pathway is cofactor biosynthesis; coenzyme A biosynthesis. Its function is as follows. Catalyzes the reversible reaction in which hydroxymethyl group from 5,10-methylenetetrahydrofolate is transferred onto alpha-ketoisovalerate to form ketopantoate. The polypeptide is 3-methyl-2-oxobutanoate hydroxymethyltransferase (Sulfurisphaera tokodaii (strain DSM 16993 / JCM 10545 / NBRC 100140 / 7) (Sulfolobus tokodaii)).